The primary structure comprises 141 residues: ATP synthase epsilon chain (141 aa).

This sequence belongs to the ATPase epsilon chain family. F-type ATPases have 2 components, CF(1) - the catalytic core - and CF(0) - the membrane proton channel. CF(1) has five subunits: alpha(3), beta(3), gamma(1), delta(1), epsilon(1). CF(0) has three main subunits: a, b and c.

It is found in the cell inner membrane. Functionally, produces ATP from ADP in the presence of a proton gradient across the membrane. The protein is ATP synthase epsilon chain of Chromohalobacter salexigens (strain ATCC BAA-138 / DSM 3043 / CIP 106854 / NCIMB 13768 / 1H11).